We begin with the raw amino-acid sequence, 250 residues long: DNA polymerase sliding clamp (250 aa).

It belongs to the PCNA family. In terms of assembly, homotrimer. The subunits circularize to form a toroid; DNA passes through its center. Replication factor C (RFC) is required to load the toroid on the DNA.

Functionally, sliding clamp subunit that acts as a moving platform for DNA processing. Responsible for tethering the catalytic subunit of DNA polymerase and other proteins to DNA during high-speed replication. This Methanococcus maripaludis (strain C7 / ATCC BAA-1331) protein is DNA polymerase sliding clamp.